A 100-amino-acid chain; its full sequence is Urease subunit gamma (100 aa).

It belongs to the urease gamma subunit family. Heterotrimer of UreA (gamma), UreB (beta) and UreC (alpha) subunits. Three heterotrimers associate to form the active enzyme.

Its subcellular location is the cytoplasm. The enzyme catalyses urea + 2 H2O + H(+) = hydrogencarbonate + 2 NH4(+). Its pathway is nitrogen metabolism; urea degradation; CO(2) and NH(3) from urea (urease route): step 1/1. The protein is Urease subunit gamma of Thermosynechococcus vestitus (strain NIES-2133 / IAM M-273 / BP-1).